Reading from the N-terminus, the 177-residue chain is Adenine phosphoribosyltransferase (177 aa).

The protein belongs to the purine/pyrimidine phosphoribosyltransferase family. As to quaternary structure, homodimer.

It localises to the cytoplasm. It carries out the reaction AMP + diphosphate = 5-phospho-alpha-D-ribose 1-diphosphate + adenine. Its pathway is purine metabolism; AMP biosynthesis via salvage pathway; AMP from adenine: step 1/1. In terms of biological role, catalyzes a salvage reaction resulting in the formation of AMP, that is energically less costly than de novo synthesis. The chain is Adenine phosphoribosyltransferase from Chlorobium phaeobacteroides (strain BS1).